Here is a 200-residue protein sequence, read N- to C-terminus: Dephospho-CoA kinase (200 aa).

One can recognise a DPCK domain in the interval 3-200 (VIGLTGGIGS…KKYMTLAQGS (198 aa)). 11-16 (GSGKTS) contributes to the ATP binding site.

The protein belongs to the CoaE family.

It localises to the cytoplasm. The enzyme catalyses 3'-dephospho-CoA + ATP = ADP + CoA + H(+). The protein operates within cofactor biosynthesis; coenzyme A biosynthesis; CoA from (R)-pantothenate: step 5/5. Its function is as follows. Catalyzes the phosphorylation of the 3'-hydroxyl group of dephosphocoenzyme A to form coenzyme A. The polypeptide is Dephospho-CoA kinase (Nitrosospira multiformis (strain ATCC 25196 / NCIMB 11849 / C 71)).